A 236-amino-acid polypeptide reads, in one-letter code: Eukaryotic translation initiation factor 3 subunit J (236 aa).

The segment at 1–84 is disordered; sequence MADDWESAAD…LREEEAEAER (84 aa). Residues 28–46 are compositionally biased toward acidic residues; it reads GEDEDEDIKDSWEDEEEKK. 2 stretches are compositionally biased toward basic and acidic residues: residues 47-58 and 68-77; these read DEEKPTKTEAPA and AKLEQQALRE.

Belongs to the eIF-3 subunit J family. Component of the eukaryotic translation initiation factor 3 (eIF-3) complex. The eIF-3 complex interacts with pix.

It is found in the cytoplasm. Functionally, component of the eukaryotic translation initiation factor 3 (eIF-3) complex, which is involved in protein synthesis of a specialized repertoire of mRNAs and, together with other initiation factors, stimulates binding of mRNA and methionyl-tRNAi to the 40S ribosome. The eIF-3 complex specifically targets and initiates translation of a subset of mRNAs involved in cell proliferation. The chain is Eukaryotic translation initiation factor 3 subunit J from Drosophila sechellia (Fruit fly).